Reading from the N-terminus, the 380-residue chain is Chaperone protein DnaJ (380 aa).

The J domain occupies 5-70 (DYYEVLGVSK…QKRQTYDQYG (66 aa)). A CR-type zinc finger spans residues 136-214 (GKEVEIKIPT…CHGQGRVEKT (79 aa)). 8 residues coordinate Zn(2+): C149, C152, C166, C169, C188, C191, C202, and C205. CXXCXGXG motif repeat units lie at residues 149 to 156 (CDPCDGSG), 166 to 173 (CTTCHGAG), 188 to 195 (CPTCQGQG), and 202 to 209 (CDSCHGQG).

It belongs to the DnaJ family. Homodimer. Requires Zn(2+) as cofactor.

It is found in the cytoplasm. In terms of biological role, participates actively in the response to hyperosmotic and heat shock by preventing the aggregation of stress-denatured proteins and by disaggregating proteins, also in an autonomous, DnaK-independent fashion. Unfolded proteins bind initially to DnaJ; upon interaction with the DnaJ-bound protein, DnaK hydrolyzes its bound ATP, resulting in the formation of a stable complex. GrpE releases ADP from DnaK; ATP binding to DnaK triggers the release of the substrate protein, thus completing the reaction cycle. Several rounds of ATP-dependent interactions between DnaJ, DnaK and GrpE are required for fully efficient folding. Also involved, together with DnaK and GrpE, in the DNA replication of plasmids through activation of initiation proteins. This chain is Chaperone protein DnaJ, found in Pseudoalteromonas translucida (strain TAC 125).